The following is a 251-amino-acid chain: Protein crossbronx (251 aa).

Positions 20–176 (QQEYKILAEY…TRENIRESLA (157 aa)) constitute a UBC core domain. Residues 211-251 (QSKHLESQSQQSNNGGNGGGGGAATGLSWVKEGEFKPLSVE) form a disordered region. Positions 225 to 234 (GGNGGGGGAA) are enriched in gly residues.

It belongs to the ubiquitin-conjugating enzyme family. FTS subfamily.

The polypeptide is Protein crossbronx (cbx) (Drosophila willistoni (Fruit fly)).